A 371-amino-acid polypeptide reads, in one-letter code: DNA repair and recombination protein rti1 (371 aa).

The disordered stretch occupies residues 346–371 (IDHNRSMPIRRPSLTSNNSANTFSTK). Positions 358–371 (SLTSNNSANTFSTK) are enriched in polar residues.

Belongs to the RAD52 family. As to quaternary structure, interacts with rph51 and rph54.

Active in the repair of DNA damage and in mating-type switching. Probably involved in the repair of DNA double-strands breaks. Has a role in promoting S phase completion. This chain is DNA repair and recombination protein rti1 (rti1), found in Schizosaccharomyces pombe (strain 972 / ATCC 24843) (Fission yeast).